We begin with the raw amino-acid sequence, 428 residues long: GTPase Obg (428 aa).

The Obg domain maps to 1-158 (MFVDQVKIYV…RDVILELKVL (158 aa)). The segment at 117-145 (ARGGRGGRGNSRFATPTNPAPEIAENGEP) is disordered. The region spanning 159 to 329 (ADVGLVGFPS…LLFEVANLLE (171 aa)) is the OBG-type G domain. Residues 165–172 (GFPSVGKS), 190–194 (FTTIV), 212–215 (DLPG), 282–285 (NKMD), and 310–312 (SAV) each bind GTP. 2 residues coordinate Mg(2+): Ser172 and Thr192. In terms of domain architecture, OCT spans 350 to 428 (KLETEGVKFD…ILEYEFEFID (79 aa)).

The protein belongs to the TRAFAC class OBG-HflX-like GTPase superfamily. OBG GTPase family. As to quaternary structure, monomer. Mg(2+) serves as cofactor.

Its subcellular location is the cytoplasm. An essential GTPase which binds GTP, GDP and possibly (p)ppGpp with moderate affinity, with high nucleotide exchange rates and a fairly low GTP hydrolysis rate. Plays a role in control of the cell cycle, stress response, ribosome biogenesis and in those bacteria that undergo differentiation, in morphogenesis control. This Bacillus cereus (strain ATCC 10987 / NRS 248) protein is GTPase Obg.